The primary structure comprises 367 residues: Flagellar P-ring protein (367 aa).

An N-terminal signal peptide occupies residues 1–22 (MRRMLVIRWILAIHLIATQVFA).

It belongs to the FlgI family. As to quaternary structure, the basal body constitutes a major portion of the flagellar organelle and consists of four rings (L,P,S, and M) mounted on a central rod.

Its subcellular location is the periplasm. It is found in the bacterial flagellum basal body. Functionally, assembles around the rod to form the L-ring and probably protects the motor/basal body from shearing forces during rotation. This is Flagellar P-ring protein from Legionella pneumophila (strain Corby).